Here is a 1241-residue protein sequence, read N- to C-terminus: Interphotoreceptor matrix proteoglycan 2 (1241 aa).

A signal peptide spans 1 to 28 (MIMFLPLGRISLGILILFLTGGNLVSVS). At 29 to 1104 (EEIQDRMHAV…CEEFVSEPFV (1076 aa)) the chain is on the extracellular side. Threonine 193 carries an O-linked (GalNAc...) threonine glycan. Residues 206 to 234 (AASERSAASPQESISNEIENVTEQPTPPA) are disordered. Polar residues predominate over residues 211 to 229 (SAASPQESISNEIENVTEQ). A glycan (N-linked (GlcNAc...) asparagine) is linked at asparagine 225. Residue threonine 231 is glycosylated (O-linked (GalNAc...) threonine). The SEA 1 domain occupies 235 to 349 (AEQIAEFSIQ…KPTAVYTISN (115 aa)). The interval 255 to 263 (RDPSSALYR) is hyaluronan-binding motif involved in chondroitin sulfate A-binding. Residues asparagine 297, asparagine 316, and asparagine 366 are each glycosylated (N-linked (GlcNAc...) asparagine). O-linked (GalNAc...) threonine glycosylation is found at threonine 429, threonine 430, and threonine 431. Residues 431-443 (TISPFGFSSGPPS) are compositionally biased toward low complexity. 2 disordered regions span residues 431–456 (TISP…STLG) and 500–520 (VAPE…TEES). The O-linked (GalNAc...) threonine glycan is linked to threonine 817. N-linked (GlcNAc...) asparagine glycans are attached at residues asparagine 841, asparagine 945, and asparagine 959. The SEA 2 domain maps to 900–1013 (GALVVFFSLR…YSLDVESGDD (114 aa)). 2 consecutive EGF-like domains span residues 1013–1054 (DANP…LPCQ) and 1055–1096 (SVCD…QHCE). Cystine bridges form between cysteine 1017–cysteine 1028, cysteine 1022–cysteine 1039, cysteine 1041–cysteine 1053, cysteine 1057–cysteine 1070, cysteine 1064–cysteine 1080, and cysteine 1082–cysteine 1095. The hyaluronan-binding motif involved in chondroitin sulfate C-binding stretch occupies residues 1083-1091 (RVGSNWWYR). A helical membrane pass occupies residues 1105-1125 (IGITIASVVSLLLVASAVVFF). At 1126–1241 (LAKMLQAQNV…FVREHEMEEL (116 aa)) the chain is on the cytoplasmic side. The interval 1128–1136 (KMLQAQNVR) is hyaluronan-binding motif involved in chondroitin sulfate A- and C-binding. Residues 1139 to 1145 (RQRPTNR) form a hyaluronan-binding motif involved in chondroitin sulfate C-binding region. Positions 1210-1218 (KEEIQERMR) are hyaluronan-binding motif involved in chondroitin sulfate A- and C-binding motif.

In terms of tissue distribution, expressed in the pineal gland and the outer layer of the retina.

Its subcellular location is the photoreceptor outer segment membrane. It localises to the photoreceptor inner segment membrane. The protein resides in the secreted. It is found in the extracellular space. The protein localises to the extracellular matrix. Its subcellular location is the interphotoreceptor matrix. Functionally, chondroitin sulfate- and hyaluronan-binding proteoglycan involved in the organization of interphotoreceptor matrix; may participate in the maturation and maintenance of the light-sensitive photoreceptor outer segment. Binds heparin. In Rattus norvegicus (Rat), this protein is Interphotoreceptor matrix proteoglycan 2 (Impg2).